A 227-amino-acid chain; its full sequence is Cytochrome c oxidase subunit 2 (227 aa).

The Mitochondrial intermembrane portion of the chain corresponds to 1-14; the sequence is MAYPLQLGFQDASS. A helical membrane pass occupies residues 15-45; the sequence is PIMEELLHFHDHTLMIVFLISSLVLYIISLM. Residues 46 to 59 are Mitochondrial matrix-facing; it reads LTTKLTHTSTMDAQ. A helical membrane pass occupies residues 60–87; that stretch reads EVETIWTILPAIILILIALPSLRILYMM. Residues 88–227 lie on the Mitochondrial intermembrane side of the membrane; that stretch reads DEINNPSLTV…HFENWTTTML (140 aa). Residues histidine 161, cysteine 196, glutamate 198, cysteine 200, histidine 204, and methionine 207 each coordinate Cu cation. Glutamate 198 lines the Mg(2+) pocket.

This sequence belongs to the cytochrome c oxidase subunit 2 family. As to quaternary structure, component of the cytochrome c oxidase (complex IV, CIV), a multisubunit enzyme composed of 14 subunits. The complex is composed of a catalytic core of 3 subunits MT-CO1, MT-CO2 and MT-CO3, encoded in the mitochondrial DNA, and 11 supernumerary subunits COX4I, COX5A, COX5B, COX6A, COX6B, COX6C, COX7A, COX7B, COX7C, COX8 and NDUFA4, which are encoded in the nuclear genome. The complex exists as a monomer or a dimer and forms supercomplexes (SCs) in the inner mitochondrial membrane with NADH-ubiquinone oxidoreductase (complex I, CI) and ubiquinol-cytochrome c oxidoreductase (cytochrome b-c1 complex, complex III, CIII), resulting in different assemblies (supercomplex SCI(1)III(2)IV(1) and megacomplex MCI(2)III(2)IV(2)). Found in a complex with TMEM177, COA6, COX18, COX20, SCO1 and SCO2. Interacts with TMEM177 in a COX20-dependent manner. Interacts with COX20. Interacts with COX16. Requires Cu cation as cofactor.

It localises to the mitochondrion inner membrane. It carries out the reaction 4 Fe(II)-[cytochrome c] + O2 + 8 H(+)(in) = 4 Fe(III)-[cytochrome c] + 2 H2O + 4 H(+)(out). Component of the cytochrome c oxidase, the last enzyme in the mitochondrial electron transport chain which drives oxidative phosphorylation. The respiratory chain contains 3 multisubunit complexes succinate dehydrogenase (complex II, CII), ubiquinol-cytochrome c oxidoreductase (cytochrome b-c1 complex, complex III, CIII) and cytochrome c oxidase (complex IV, CIV), that cooperate to transfer electrons derived from NADH and succinate to molecular oxygen, creating an electrochemical gradient over the inner membrane that drives transmembrane transport and the ATP synthase. Cytochrome c oxidase is the component of the respiratory chain that catalyzes the reduction of oxygen to water. Electrons originating from reduced cytochrome c in the intermembrane space (IMS) are transferred via the dinuclear copper A center (CU(A)) of subunit 2 and heme A of subunit 1 to the active site in subunit 1, a binuclear center (BNC) formed by heme A3 and copper B (CU(B)). The BNC reduces molecular oxygen to 2 water molecules using 4 electrons from cytochrome c in the IMS and 4 protons from the mitochondrial matrix. In Tupaia glis (Common tree shrew), this protein is Cytochrome c oxidase subunit 2 (MT-CO2).